The following is a 127-amino-acid chain: Aspartate 1-decarboxylase (127 aa).

Ser-25 acts as the Schiff-base intermediate with substrate; via pyruvic acid in catalysis. Position 25 is a pyruvic acid (Ser) (Ser-25). Thr-57 contacts substrate. Tyr-58 serves as the catalytic Proton donor. Position 73-75 (73-75) interacts with substrate; it reads GAA.

This sequence belongs to the PanD family. Heterooctamer of four alpha and four beta subunits. The cofactor is pyruvate. Post-translationally, is synthesized initially as an inactive proenzyme, which is activated by self-cleavage at a specific serine bond to produce a beta-subunit with a hydroxyl group at its C-terminus and an alpha-subunit with a pyruvoyl group at its N-terminus.

It is found in the cytoplasm. It catalyses the reaction L-aspartate + H(+) = beta-alanine + CO2. The protein operates within cofactor biosynthesis; (R)-pantothenate biosynthesis; beta-alanine from L-aspartate: step 1/1. Its function is as follows. Catalyzes the pyruvoyl-dependent decarboxylation of aspartate to produce beta-alanine. This Bacillus cereus (strain B4264) protein is Aspartate 1-decarboxylase.